Consider the following 272-residue polypeptide: NAD kinase (272 aa).

Aspartate 50 acts as the Proton acceptor in catalysis. Residues 50-51 (DG), 126-127 (NE), arginine 152, aspartate 154, 165-170 (TAYNKS), and alanine 189 contribute to the NAD(+) site.

This sequence belongs to the NAD kinase family. A divalent metal cation serves as cofactor.

It is found in the cytoplasm. It carries out the reaction NAD(+) + ATP = ADP + NADP(+) + H(+). Involved in the regulation of the intracellular balance of NAD and NADP, and is a key enzyme in the biosynthesis of NADP. Catalyzes specifically the phosphorylation on 2'-hydroxyl of the adenosine moiety of NAD to yield NADP. The protein is NAD kinase of Streptococcus pneumoniae serotype 19F (strain G54).